Consider the following 251-residue polypeptide: Large ribosomal subunit protein uL3 (251 aa).

N5-methylglutamine is present on Q151. Residues 214 to 251 form a disordered region; that stretch reads KDAPFPAGLKSAANSNSAPTETPAEEVAAPEATEGQEG. The segment covering 231–251 has biased composition (low complexity); sequence APTETPAEEVAAPEATEGQEG.

The protein belongs to the universal ribosomal protein uL3 family. Part of the 50S ribosomal subunit. Forms a cluster with proteins L14 and L19. Post-translationally, methylated by PrmB.

In terms of biological role, one of the primary rRNA binding proteins, it binds directly near the 3'-end of the 23S rRNA, where it nucleates assembly of the 50S subunit. The protein is Large ribosomal subunit protein uL3 of Rhizorhabdus wittichii (strain DSM 6014 / CCUG 31198 / JCM 15750 / NBRC 105917 / EY 4224 / RW1) (Sphingomonas wittichii).